Here is a 154-residue protein sequence, read N- to C-terminus: Interleukin-7 (154 aa).

Positions 1–25 are cleaved as a signal peptide; that stretch reads MFHVSFRYIFGIPPLILVLLPVTSS. Intrachain disulfides connect Cys-27/Cys-145, Cys-58/Cys-133, and Cys-71/Cys-116. N-linked (GlcNAc...) asparagine glycans are attached at residues Asn-94 and Asn-115.

It belongs to the IL-7/IL-9 family. In terms of assembly, interacts with IL7R and CSF2RG. Three disulfide bonds are present.

It localises to the secreted. Hematopoietic cytokine that plays an essential role in the development, expansion, and survival of naive and memory T-cells and B-cells thereby regulating the number of mature lymphocytes and maintaining lymphoid homeostasis. Mechanistically, exerts its biological effects through a receptor composed of IL7RA subunit and the cytokine receptor common subunit gamma/CSF2RG. Binding to the receptor leads to activation of various kinases including JAK1 or JAK3 depending on the cell type and subsequently propagation of signals through activation of several downstream signaling pathways including the PI3K/Akt/mTOR or the JAK-STAT5. This Rattus norvegicus (Rat) protein is Interleukin-7 (Il7).